Reading from the N-terminus, the 86-residue chain is uncharacterized protein (86 aa).

Helical transmembrane passes span 21 to 43 (VFWV…EATA) and 53 to 75 (FWYA…YFYF).

It localises to the cell membrane. This is an uncharacterized protein from Archaeoglobus fulgidus (strain ATCC 49558 / DSM 4304 / JCM 9628 / NBRC 100126 / VC-16).